The primary structure comprises 254 residues: Imidazole glycerol phosphate synthase subunit HisF (254 aa).

Residues aspartate 11 and aspartate 130 contribute to the active site.

Belongs to the HisA/HisF family. Heterodimer of HisH and HisF.

The protein localises to the cytoplasm. It carries out the reaction 5-[(5-phospho-1-deoxy-D-ribulos-1-ylimino)methylamino]-1-(5-phospho-beta-D-ribosyl)imidazole-4-carboxamide + L-glutamine = D-erythro-1-(imidazol-4-yl)glycerol 3-phosphate + 5-amino-1-(5-phospho-beta-D-ribosyl)imidazole-4-carboxamide + L-glutamate + H(+). The protein operates within amino-acid biosynthesis; L-histidine biosynthesis; L-histidine from 5-phospho-alpha-D-ribose 1-diphosphate: step 5/9. Functionally, IGPS catalyzes the conversion of PRFAR and glutamine to IGP, AICAR and glutamate. The HisF subunit catalyzes the cyclization activity that produces IGP and AICAR from PRFAR using the ammonia provided by the HisH subunit. This is Imidazole glycerol phosphate synthase subunit HisF from Oceanobacillus iheyensis (strain DSM 14371 / CIP 107618 / JCM 11309 / KCTC 3954 / HTE831).